The chain runs to 536 residues: Light-independent protochlorophyllide reductase subunit B (536 aa).

Residue D36 coordinates [4Fe-4S] cluster. The active-site Proton donor is D292. 427–428 contacts substrate; the sequence is GL. The interval 447 to 489 is disordered; sequence QSHLGHLGGHQSQTEQQQSQAATNPSTQSNTDSSSEESPLWTP. A compositionally biased stretch (low complexity) spans 448–469; it reads SHLGHLGGHQSQTEQQQSQAAT. Residues 470–483 are compositionally biased toward polar residues; that stretch reads NPSTQSNTDSSSEE.

This sequence belongs to the ChlB/BchB/BchZ family. In terms of assembly, protochlorophyllide reductase is composed of three subunits; ChlL, ChlN and ChlB. Forms a heterotetramer of two ChlB and two ChlN subunits. [4Fe-4S] cluster serves as cofactor.

It carries out the reaction chlorophyllide a + oxidized 2[4Fe-4S]-[ferredoxin] + 2 ADP + 2 phosphate = protochlorophyllide a + reduced 2[4Fe-4S]-[ferredoxin] + 2 ATP + 2 H2O. The protein operates within porphyrin-containing compound metabolism; chlorophyll biosynthesis (light-independent). In terms of biological role, component of the dark-operative protochlorophyllide reductase (DPOR) that uses Mg-ATP and reduced ferredoxin to reduce ring D of protochlorophyllide (Pchlide) to form chlorophyllide a (Chlide). This reaction is light-independent. The NB-protein (ChlN-ChlB) is the catalytic component of the complex. The sequence is that of Light-independent protochlorophyllide reductase subunit B from Prochlorococcus marinus (strain MIT 9303).